Consider the following 276-residue polypeptide: MEQSIRDEMRVLPSIDPHFEIERRIAFIKRKLQEAGCKSLVLGISGGVDSTTLGRLAQLAVDQLNEETGSNDYQFIAVRLPYGEQKDEDEAQLALSFIKPTHSISVNIKQGVDGMHAASNIALEGTGLMPEDAAKVDFVKGNVKARARMIAQYEIAGYVGGLVLGTDHSAENITGFYTKFGDGACDLAPLFGLNKRQVREVAATLGAPEVLVKKVPTADLEELAPQKADEDALNLTYEQIDDFLEGKPVSQQVVDRLVSIYKATQHKRQPIPTIYD.

Position 43-50 (43-50 (GISGGVDS)) interacts with ATP. A Mg(2+)-binding site is contributed by aspartate 49. Position 146 (arginine 146) interacts with deamido-NAD(+). Threonine 166 contacts ATP. Mg(2+) is bound at residue glutamate 171. The deamido-NAD(+) site is built by lysine 179 and aspartate 186. Positions 195 and 217 each coordinate ATP. Position 266–267 (266–267 (HK)) interacts with deamido-NAD(+).

The protein belongs to the NAD synthetase family. As to quaternary structure, homodimer.

It catalyses the reaction deamido-NAD(+) + NH4(+) + ATP = AMP + diphosphate + NAD(+) + H(+). It functions in the pathway cofactor biosynthesis; NAD(+) biosynthesis; NAD(+) from deamido-NAD(+) (ammonia route): step 1/1. Catalyzes the ATP-dependent amidation of deamido-NAD to form NAD. Uses ammonia as a nitrogen source. The polypeptide is NH(3)-dependent NAD(+) synthetase (Vibrio parahaemolyticus serotype O3:K6 (strain RIMD 2210633)).